The primary structure comprises 494 residues: Putative glucuronosyltransferase PGSIP7 (494 aa).

A helical membrane pass occupies residues 4-24 (QRTLMFSCWVLSLLIIKTTAY). Residues aspartate 161 and aspartate 163 each coordinate Mn(2+). 5 consecutive transmembrane segments (helical) span residues 316–336 (YSAE…IILV), 362–382 (AFKF…FFII), 389–409 (LIGW…PINA), 410–430 (FLLP…TLLV), and 444–464 (LSVF…FVKI).

It belongs to the glycosyltransferase 8 family. Glycogenin subfamily. Mn(2+) serves as cofactor.

It is found in the membrane. In Arabidopsis thaliana (Mouse-ear cress), this protein is Putative glucuronosyltransferase PGSIP7 (PGSIP7).